Here is a 635-residue protein sequence, read N- to C-terminus: Kelch-like protein 31 (635 aa).

The BTB domain maps to 74 to 138; the sequence is CDLTVATKSK…AYSGKLTLSL (65 aa). In terms of domain architecture, BACK spans 173-274; it reads CMYVVNIADT…TPQDLVSHVQ (102 aa). 6 Kelch repeats span residues 318 to 366, 367 to 420, 421 to 467, 469 to 514, 516 to 566, and 567 to 615; these read VLLT…VLDG, FLYV…TFNG, LLFA…VIDG, ILVS…TVGD, AYVL…TLNN, and KIYL…VVTI.

As to expression, strongly expressed in fast skeletal muscle, and weakly in heart. Not expressed in other tissues.

This Danio rerio (Zebrafish) protein is Kelch-like protein 31 (klhl31).